We begin with the raw amino-acid sequence, 326 residues long: Adenosine receptor A1 (326 aa).

Over 1 to 10 (MPPAISAFQA) the chain is Extracellular. A helical transmembrane segment spans residues 11 to 33 (AYIGIEVLIALVSVPGNVLVIWA). At 34–46 (VKVNQALRDATFC) the chain is on the cytoplasmic side. The chain crosses the membrane as a helical span at residues 47 to 69 (FIVSLAVADVAVGALVIPLAILI). Residues 70–80 (NIGPRTYFHTC) lie on the Extracellular side of the membrane. An intrachain disulfide couples cysteine 80 to cysteine 169. Residues 81–102 (LMVACPVLILTQSSILALLAIA) traverse the membrane as a helical segment. Residues 103–123 (VDRYLRVKIPLRYKTVVTPRR) are Cytoplasmic-facing. The chain crosses the membrane as a helical span at residues 124–146 (AAVAIAGCWILSFVVGLTPLFGW). Residues 147 to 176 (NRLGEAQRAWAANGSGGEPVIKCEFEKVIS) lie on the Extracellular side of the membrane. Asparagine 159 carries an N-linked (GlcNAc...) asparagine glycan. The helical transmembrane segment at 177 to 201 (MEYMVYFNFFVWVLPPLLLMVLIYL) threads the bilayer. The Cytoplasmic segment spans residues 202–235 (EVFYLIRRQLGKKVSASSGDPQKYYGKELKIAKS). A helical transmembrane segment spans residues 236-259 (LALILFLFALSWLPLHILNCITLF). The Extracellular segment spans residues 260-267 (CPSCRKPS). A helical membrane pass occupies residues 268–292 (ILMYIAIFLTHGNSAMNPIVYAFRI). Residues 293–326 (QKFRVTFLKIWNDHFRCQPTPPVDEDPPEEAPHD) lie on the Cytoplasmic side of the membrane. A lipid anchor (S-palmitoyl cysteine) is attached at cysteine 309.

It belongs to the G-protein coupled receptor 1 family.

The protein resides in the cell membrane. In terms of biological role, receptor for adenosine. The activity of this receptor is mediated by G proteins which inhibit adenylyl cyclase. In Canis lupus familiaris (Dog), this protein is Adenosine receptor A1 (ADORA1).